The primary structure comprises 695 residues: Pentatricopeptide repeat-containing protein 1, mitochondrial (695 aa).

PPR repeat units lie at residues 133 to 169, 170 to 204, 205 to 243, 244 to 278, 279 to 315, and 316 to 352; these read TQYW…RLQP, LECN…DLEP, SDAT…NFQL, NLKT…GHAV, TEET…GIKP, and SRHG…TILL. Positions 391–416 are disordered; that stretch reads QKLEGPPALPEARVTSRTQPEVETTA. 4 PPR repeats span residues 470–485, 517–551, 552–583, and 584–618; these read EGFL…QPDI, DVTF…GIVP, NLRT…QVSP, and NIHI…SVPV. The tract at residues 672–695 is disordered; the sequence is WQEFQNKPVGDQDTTDKAGGLRDG. A compositionally biased stretch (basic and acidic residues) spans 685 to 695; the sequence is TTDKAGGLRDG.

It belongs to the PTCD1 family. As to quaternary structure, associates with mitochondrial leucine tRNAs. Interacts with ELAC2.

It is found in the mitochondrion. The protein resides in the mitochondrion matrix. In terms of biological role, mitochondrial protein implicated in negative regulation of leucine tRNA levels, as well as negative regulation of mitochondria-encoded proteins and COX activity. Also affects the 3'-processing of mitochondrial tRNAs. The sequence is that of Pentatricopeptide repeat-containing protein 1, mitochondrial (Ptcd1) from Mus musculus (Mouse).